The primary structure comprises 113 residues: ATP-dependent Clp protease adapter protein ClpS (113 aa).

The segment covering 1 to 11 (MTRPTIPPGPP) has biased composition (pro residues). 2 disordered regions span residues 1–24 (MTRP…ERTE) and 92–113 (TAHA…SEGE).

This sequence belongs to the ClpS family. As to quaternary structure, binds to the N-terminal domain of the chaperone ClpA.

Involved in the modulation of the specificity of the ClpAP-mediated ATP-dependent protein degradation. The polypeptide is ATP-dependent Clp protease adapter protein ClpS (Deinococcus radiodurans (strain ATCC 13939 / DSM 20539 / JCM 16871 / CCUG 27074 / LMG 4051 / NBRC 15346 / NCIMB 9279 / VKM B-1422 / R1)).